The chain runs to 340 residues: rRNA adenine N-6-methyltransferase (340 aa).

Positions 1-25 (MAGPQDRPRGRGPSSGRPQRPVGGR) are enriched in low complexity. The disordered stretch occupies residues 1–37 (MAGPQDRPRGRGPSSGRPQRPVGGRSQRDRDRRVLGQ). S-adenosyl-L-methionine contacts are provided by N38, L40, G65, E86, D111, and A127. The tract at residues 284-340 (RGGAARGPGDQRGRRGRPGGGPRPDGRAGGGPRRDAGGRRTGDGRGGRPRPPRGGQA) is disordered. Residues 301–314 (PGGGPRPDGRAGGG) show a composition bias toward gly residues. Basic and acidic residues predominate over residues 315 to 329 (PRRDAGGRRTGDGRG).

It belongs to the class I-like SAM-binding methyltransferase superfamily. rRNA adenine N(6)-methyltransferase family.

In terms of biological role, involved in erythromycin resistance. In Aeromicrobium erythreum (strain ATCC 51598 / DSM 8599 / JCM 8359 / NBRC 15406 / NRRL B-3381), this protein is rRNA adenine N-6-methyltransferase (ermA).